A 628-amino-acid polypeptide reads, in one-letter code: uncharacterized protein (628 aa).

Belongs to the IucA/IucC family.

This is an uncharacterized protein from Sinorhizobium fredii (strain NBRC 101917 / NGR234).